An 82-amino-acid chain; its full sequence is Small ribosomal subunit protein uS17 (82 aa).

It belongs to the universal ribosomal protein uS17 family. In terms of assembly, part of the 30S ribosomal subunit.

One of the primary rRNA binding proteins, it binds specifically to the 5'-end of 16S ribosomal RNA. The sequence is that of Small ribosomal subunit protein uS17 from Thermosynechococcus vestitus (strain NIES-2133 / IAM M-273 / BP-1).